Reading from the N-terminus, the 296-residue chain is Nucleotide-binding protein SMU_1306c (296 aa).

ATP is bound at residue 13-20 (GMSGAGKT). Position 63 to 66 (63 to 66 (DMRS)) interacts with GTP.

It belongs to the RapZ-like family.

Displays ATPase and GTPase activities. The chain is Nucleotide-binding protein SMU_1306c from Streptococcus mutans serotype c (strain ATCC 700610 / UA159).